The primary structure comprises 615 residues: Nuclear receptor subfamily 1 group D member 1 (615 aa).

Residues 1-12 (MTTLDSNNNTGG) show a composition bias toward polar residues. The interval 1–70 (MTTLDSNNNT…TQDPARSFGS (70 aa)) is required for phosphorylation by CSNK1E and cytoplasmic localization. A disordered region spans residues 1-120 (MTTLDSNNNT…SSRVSPSKGT (120 aa)). Positions 1 to 129 (MTTLDSNNNT…TSNITKLNGM (129 aa)) are modulating. The span at 14-34 (ITYIGSSGSSPSRTSPESLYS) shows a compositional bias: low complexity. Over residues 35–48 (DSSNGSFQSLTQGC) the composition is skewed to polar residues. A crucial for activation of GJA1 region spans residues 49 to 285 (PTYFPPSPTG…PPRSPSPEPT (237 aa)). Ser-55 and Ser-59 each carry phosphoserine; by GSK3-beta. Residues 70-94 (SAPPSLSDDSSPSSASSSSSSSSSS) show a composition bias toward low complexity. A DNA-binding region (nuclear receptor) is located at residues 130–206 (VLLCKVCGDV…VGMSRDAVRF (77 aa)). 2 NR C4-type zinc fingers span residues 133–153 (CKVC…CEGC) and 170–194 (CLKN…FKKC). Lys-192 and Lys-193 each carry N6-acetyllysine; by KAT5. Disordered regions lie at residues 235-286 (LCPL…EPTM) and 312-337 (PGNF…SQGC). Residues 240-252 (TSPTPHPTSGSMG) are compositionally biased toward low complexity. Residues 253–262 (PSPPPAPAPT) show a composition bias toward pro residues. Phosphothreonine; by CDK1 is present on Thr-275. In terms of domain architecture, NR LBD spans 285–615 (TMEDVISQVA…KLLSFRVDAQ (331 aa)). A compositionally biased stretch (polar residues) spans 312–328 (PGNFNANHASGSPSATT). Cys-419 is a heme binding site. Position 592 is an N6-acetyllysine (Lys-592). His-603 provides a ligand contact to heme.

It belongs to the nuclear hormone receptor family. NR1 subfamily. In terms of assembly, binds DNA as a monomer or a homodimer. Interacts with NR2E3 and ZNHIT1. Interacts with C1D. Interacts with SP1. Interacts with OPHN1 (via C-terminus). Interacts with PER2; the interaction associates PER2 to BMAL1 promoter region. Interacts with CRY1. Interacts with CCAR2. Interacts with SIAH2. Interacts with FBXW7 and CDK1. Interacts with HUWE1. Interacts with NR0B2. Interacts with NFIL3. Interacts (via domain NR LBD) with HSP90AA1 and HSP90AB1. Post-translationally, ubiquitinated, leading to its proteasomal degradation. Ubiquitinated by the SCF(FBXW7) complex when phosphorylated by CDK1 leading to its proteasomal degradation. Ubiquitinated by SIAH2; leading to its proteasomal degradation. Rapidly ubiquitinated in response to inflammatory triggers and sumoylation is a prerequisite to its ubiquitination. In terms of processing, sumoylated by UBE2I, desumoylated by SENP1, and sumoylation is a prerequisite to its ubiquitination. Phosphorylated by CSNK1E; phosphorylation enhances its cytoplasmic localization. Post-translationally, undergoes lysosome-mediated degradation in a time-dependent manner in the liver. Expressed during adipocyte differentiation (at protein level). Expressed in skeletal muscle, bladder, lumbar spinal cord, pancreatic islets and hypothalamus. Expressed in developing and adult retina. In the adult retina, predominantly expressed in the outer nuclear layer, where rod and cone cells reside, and also localized to the ganglion cell layer. Expressed in a circadian manner in the liver. Expressed in a circadian manner in the lung with a peak between ZT8 and ZT12.

The protein localises to the nucleus. The protein resides in the cytoplasm. Its subcellular location is the cell projection. It is found in the dendrite. It localises to the dendritic spine. Functionally, transcriptional repressor which coordinates circadian rhythm and metabolic pathways in a heme-dependent manner. Integral component of the complex transcription machinery that governs circadian rhythmicity and forms a critical negative limb of the circadian clock by directly repressing the expression of core clock components BMAL1, CLOCK and CRY1. Also regulates genes involved in metabolic functions, including lipid and bile acid metabolism, adipogenesis, gluconeogenesis and the macrophage inflammatory response. Acts as a receptor for heme which stimulates its interaction with the NCOR1/HDAC3 corepressor complex, enhancing transcriptional repression. Recognizes two classes of DNA response elements within the promoter of its target genes and can bind to DNA as either monomers or homodimers, depending on the nature of the response element. Binds as a monomer to a response element composed of the consensus half-site motif 5'-[A/G]GGTCA-3' preceded by an A/T-rich 5' sequence (RevRE), or as a homodimer to a direct repeat of the core motif spaced by two nucleotides (RevDR-2). Acts as a potent competitive repressor of ROR alpha (RORA) function and regulates the levels of its ligand heme by repressing the expression of PPARGC1A, a potent inducer of heme synthesis. Regulates lipid metabolism by repressing the expression of APOC3 and by influencing the activity of sterol response element binding proteins (SREBPs); represses INSIG2 which interferes with the proteolytic activation of SREBPs which in turn govern the rhythmic expression of enzymes with key functions in sterol and fatty acid synthesis. Regulates gluconeogenesis via repression of G6PC1 and PEPCK and adipocyte differentiation via repression of PPARG. Regulates glucagon release in pancreatic alpha-cells via the AMPK-NAMPT-SIRT1 pathway and the proliferation, glucose-induced insulin secretion and expression of key lipogenic genes in pancreatic-beta cells. Positively regulates bile acid synthesis by increasing hepatic expression of CYP7A1 via repression of NR0B2 and NFIL3 which are negative regulators of CYP7A1. Modulates skeletal muscle oxidative capacity by regulating mitochondrial biogenesis and autophagy; controls mitochondrial biogenesis and respiration by interfering with the STK11-PRKAA1/2-SIRT1-PPARGC1A signaling pathway. Represses the expression of SERPINE1/PAI1, an important modulator of cardiovascular disease and the expression of inflammatory cytokines and chemokines in macrophages. Represses gene expression at a distance in macrophages by inhibiting the transcription of enhancer-derived RNAs (eRNAs). Plays a role in the circadian regulation of body temperature and negatively regulates thermogenic transcriptional programs in brown adipose tissue (BAT); imposes a circadian oscillation in BAT activity, increasing body temperature when awake and depressing thermogenesis during sleep. In concert with NR2E3, regulates transcriptional networks critical for photoreceptor development and function. In addition to its activity as a repressor, can also act as a transcriptional activator. In the ovarian granulosa cells acts as a transcriptional activator of STAR which plays a role in steroid biosynthesis. In collaboration with SP1, activates GJA1 transcription in a heme-independent manner. Represses the transcription of CYP2B10, CYP4A10 and CYP4A14. Represses the transcription of CES2. Represses and regulates the circadian expression of TSHB in a NCOR1-dependent manner. Negatively regulates the protein stability of NR3C1 and influences the time-dependent subcellular distribution of NR3C1, thereby affecting its transcriptional regulatory activity. Plays a critical role in the circadian control of neutrophilic inflammation in the lung; under resting, non-stress conditions, acts as a rhythmic repressor to limit inflammatory activity whereas in the presence of inflammatory triggers undergoes ubiquitin-mediated degradation thereby relieving inhibition of the inflammatory response. Plays a key role in the circadian regulation of microglial activation and neuroinflammation; suppresses microglial activation through the NF-kappaB pathway in the central nervous system. Plays a role in the regulation of the diurnal rhythms of lipid and protein metabolism in the skeletal muscle via transcriptional repression of genes controlling lipid and amino acid metabolism in the muscle. In Mus musculus (Mouse), this protein is Nuclear receptor subfamily 1 group D member 1 (Nr1d1).